The following is a 454-amino-acid chain: Histidine--tRNA ligase (454 aa).

It belongs to the class-II aminoacyl-tRNA synthetase family. As to quaternary structure, homodimer.

The protein resides in the cytoplasm. The catalysed reaction is tRNA(His) + L-histidine + ATP = L-histidyl-tRNA(His) + AMP + diphosphate + H(+). This chain is Histidine--tRNA ligase, found in Bacteroides fragilis (strain YCH46).